The sequence spans 235 residues: Germin-like protein 1-4 (235 aa).

An N-terminal signal peptide occupies residues 1-27 (MAAKLPTVVLLASFAAVILSLAAPLLA). Cysteine 37 and cysteine 55 form a disulfide bridge. N-linked (GlcNAc...) asparagine glycosylation occurs at asparagine 60. In terms of domain architecture, Cupin type-1 spans 69–226 (PGLGKPADVY…AFQVDGGVVE (158 aa)). Mn(2+) contacts are provided by histidine 120, histidine 122, glutamate 127, and histidine 171.

It belongs to the germin family. As to quaternary structure, oligomer (believed to be a pentamer but probably hexamer).

The protein resides in the secreted. It localises to the extracellular space. Its subcellular location is the apoplast. May play a role in plant defense. Probably has no oxalate oxidase activity even if the active site is conserved. This is Germin-like protein 1-4 from Oryza sativa subsp. japonica (Rice).